We begin with the raw amino-acid sequence, 514 residues long: FAD-dependent monooxygenase CPUR_05423 (514 aa).

FAD is bound by residues Val-79 and Arg-146. Residue Arg-227 is part of the active site. FAD-binding residues include Asp-358 and Gly-371.

It belongs to the paxM FAD-dependent monooxygenase family. FAD serves as cofactor.

It participates in pigment biosynthesis. FAD-dependent monooxygenase; part of the ergochrome gene cluster responsible for the typical purple-black color of the ergot sclerotia. The ergochrome gene cluster produces several ergot pigments including the yellow ergochrome secalonic acid and its derivatives, as well as the red anthraquinones endocrocin and clavorubin. The pathway begins with the synthesis of atrochrysone thioester by the polyketide synthase (PKS) CPUR_05437. The atrochrysone carboxyl ACP thioesterase CPUR_05436 then breaks the thioester bond and releases the atrochrysone carboxylic acid from CPUR_05437. The atrochrysone carboxylic acid is then converted to atrochrysone which is further transformed into emodin anthrone. The next step is performed by the anthrone oxygenase CPUR_05434 that catalyzes the oxidation of emodinanthrone to emodin. Emodin is further modified to yield monodictyphenone via several steps involving CPUR_05427, CPUR_05428, CPUR_05429 and CPUR_05430. The short chain dehydrogenase/reductase CPUR_05418 then catalyzes the C-5 ketoreduction to give the xanthone skeleton of the monomeric units. Ergochromes formation requires further dimerization steps of different xanthone units, probably catalyzed by the cytochrome P450 monooxygenase CPUR_05419. CPUR_05425, CPUR_05426 and CPUR_05431 are unique to Claviceps, thus it is likely that they are involved in further modification of xanthone units or in their dimerization. The yellow ergochromes and the red anthraquinone pigments endocrocin and clavorubin are products from the same PKS derived precursors and the latter are likely shunt products in the pathway of xanthone biosynthesis. It is proposed that atrochrysone carboxylic acid released from the PKS CPUR_05437 can also be converted to endocrocin anthrone which is further oxidized into endocrocin by CPUR_05435. Endocrocin could be then modified to clavorubin, possibly by CPUR_05423 and CPUR_05431. Clavorubin is the principal anthraquinone metabolite produced by the cluster with a much higher yield compared to endocrocin. In Claviceps purpurea (strain 20.1) (Ergot fungus), this protein is FAD-dependent monooxygenase CPUR_05423.